The sequence spans 766 residues: LPS-assembly protein LptD (766 aa).

The first 18 residues, 1 to 18, serve as a signal peptide directing secretion; that stretch reads MNIRYLLLLSLMPHLVWA.

The protein belongs to the LptD family. In terms of assembly, component of the lipopolysaccharide transport and assembly complex. Interacts with LptE and LptA.

It is found in the cell outer membrane. In terms of biological role, together with LptE, is involved in the assembly of lipopolysaccharide (LPS) at the surface of the outer membrane. In Shewanella denitrificans (strain OS217 / ATCC BAA-1090 / DSM 15013), this protein is LPS-assembly protein LptD.